The primary structure comprises 95 residues: Oxytetracycline polyketide synthase acyl carrier protein (95 aa).

A Carrier domain is found at 3–81 (LLTLSDLLTL…ALIEMTNASL (79 aa)). Position 41 is an O-(pantetheine 4'-phosphoryl)serine (S41).

4'-phosphopantetheine is transferred from CoA to a specific serine of the apo-ACP-like protein.

It participates in antibiotic biosynthesis; oxytetracycline biosynthesis. Acyl carrier protein. This is Oxytetracycline polyketide synthase acyl carrier protein from Streptomyces rimosus.